The chain runs to 340 residues: MYKSLIRPTLFKFDPEEIHYFTFNFLRKFCKIPGATSYLKSKFQVKDARLEREVFGLKFKNPVGLAAGFDKDAKLYNELSSLGFGFIEVGTVTPKPQPGNDKKRLFRLKEDSAIINRMGFNNEGVEATVNRLKSNKNVLIGGNIGKNKATPNEHAVEDYTYSFEALFDYVNYFVVNVSSPNTPNLRELQDKEPLKDLLNTLQKKNEQKKRPKPILLKIAPDLTDEQLMDIIEIVQETKIAGVIATNTTISREGLKSENKNEMGGLSGKPLTKRSTEVIRFLSEKSNKAFPIIGVGGIHTAEDAIEKLEAGASLVQLYTGFIYEGPALIKDINQKILEKGL.

FMN-binding positions include 67–71 (AGFDK) and Thr91. Substrate is bound at residue Lys71. 116–120 (NRMGF) is a binding site for substrate. FMN is bound by residues Asn143 and Asn176. Substrate is bound at residue Asn176. The Nucleophile role is filled by Ser179. Asn181 provides a ligand contact to substrate. FMN-binding residues include Lys217 and Thr245. 246–247 (NT) lines the substrate pocket. FMN contacts are provided by residues Gly267, Gly296, and 317–318 (YT).

This sequence belongs to the dihydroorotate dehydrogenase family. Type 2 subfamily. In terms of assembly, monomer. Requires FMN as cofactor.

Its subcellular location is the cell membrane. The enzyme catalyses (S)-dihydroorotate + a quinone = orotate + a quinol. Its pathway is pyrimidine metabolism; UMP biosynthesis via de novo pathway; orotate from (S)-dihydroorotate (quinone route): step 1/1. Its function is as follows. Catalyzes the conversion of dihydroorotate to orotate with quinone as electron acceptor. In Christiangramia forsetii (strain DSM 17595 / CGMCC 1.15422 / KT0803) (Gramella forsetii), this protein is Dihydroorotate dehydrogenase (quinone).